The following is a 417-amino-acid chain: Proteasome-activating nucleotidase (417 aa).

A coiled-coil region spans residues 24 to 78; that stretch reads SKYLLDRVKQLEERNVRLKEEYRKIELEKKSVENKKVQYEREIRKLTSELDRLKT. Residues 203-208 and His342 contribute to the ATP site; that span reads GTGKTL. The tract at residues 415 to 417 is docks into pockets in the proteasome alpha-ring to cause gate opening; the sequence is MFA.

This sequence belongs to the AAA ATPase family. In terms of assembly, homohexamer. The hexameric complex has a two-ring architecture resembling a top hat that caps the 20S proteasome core at one or both ends. Upon ATP-binding, the C-terminus of PAN interacts with the alpha-rings of the proteasome core by binding to the intersubunit pockets.

It is found in the cytoplasm. Functionally, ATPase which is responsible for recognizing, binding, unfolding and translocation of substrate proteins into the archaeal 20S proteasome core particle. Is essential for opening the gate of the 20S proteasome via an interaction with its C-terminus, thereby allowing substrate entry and access to the site of proteolysis. Thus, the C-termini of the proteasomal ATPase function like a 'key in a lock' to induce gate opening and therefore regulate proteolysis. Unfolding activity requires energy from ATP hydrolysis, whereas ATP binding alone promotes ATPase-20S proteasome association which triggers gate opening, and supports translocation of unfolded substrates. In Methanocella arvoryzae (strain DSM 22066 / NBRC 105507 / MRE50), this protein is Proteasome-activating nucleotidase.